The following is a 415-amino-acid chain: Gamma-glutamyl phosphate reductase (415 aa).

The protein belongs to the gamma-glutamyl phosphate reductase family.

The protein resides in the cytoplasm. The enzyme catalyses L-glutamate 5-semialdehyde + phosphate + NADP(+) = L-glutamyl 5-phosphate + NADPH + H(+). The protein operates within amino-acid biosynthesis; L-proline biosynthesis; L-glutamate 5-semialdehyde from L-glutamate: step 2/2. In terms of biological role, catalyzes the NADPH-dependent reduction of L-glutamate 5-phosphate into L-glutamate 5-semialdehyde and phosphate. The product spontaneously undergoes cyclization to form 1-pyrroline-5-carboxylate. This chain is Gamma-glutamyl phosphate reductase, found in Bacillus thuringiensis subsp. konkukian (strain 97-27).